Reading from the N-terminus, the 167-residue chain is uncharacterized protein (167 aa).

Residues 70-118 (KIVELRKAMESIITELAYIKGELKGLQEKGESKVERKEIIEEKIQKAMV) are a coiled coil. Positions 128-155 (EKEERKPAKESKRREHDVIIPEGKKEER) are enriched in basic and acidic residues. A disordered region spans residues 128 to 167 (EKEERKPAKESKRREHDVIIPEGKKEERTDDGEDGLIVCD).

This is an uncharacterized protein from Archaeoglobus fulgidus (strain ATCC 49558 / DSM 4304 / JCM 9628 / NBRC 100126 / VC-16).